Consider the following 464-residue polypeptide: 3-isopropylmalate dehydratase large subunit (464 aa).

[4Fe-4S] cluster is bound by residues C337, C397, and C400.

Belongs to the aconitase/IPM isomerase family. LeuC type 1 subfamily. In terms of assembly, heterodimer of LeuC and LeuD. The cofactor is [4Fe-4S] cluster.

The enzyme catalyses (2R,3S)-3-isopropylmalate = (2S)-2-isopropylmalate. Its pathway is amino-acid biosynthesis; L-leucine biosynthesis; L-leucine from 3-methyl-2-oxobutanoate: step 2/4. Functionally, catalyzes the isomerization between 2-isopropylmalate and 3-isopropylmalate, via the formation of 2-isopropylmaleate. In Bacillus thuringiensis (strain Al Hakam), this protein is 3-isopropylmalate dehydratase large subunit.